A 247-amino-acid chain; its full sequence is Uridylate kinase (247 aa).

An ATP-binding site is contributed by K14 to G17. Positions G22–G27 are involved in allosteric activation by GTP. G56 lines the UMP pocket. Positions 57 and 61 each coordinate ATP. UMP is bound by residues D76 and I137–T144. Residues N165, Y171, and D174 each coordinate ATP.

Belongs to the UMP kinase family. In terms of assembly, homohexamer.

It is found in the cytoplasm. It carries out the reaction UMP + ATP = UDP + ADP. It participates in pyrimidine metabolism; CTP biosynthesis via de novo pathway; UDP from UMP (UMPK route): step 1/1. Allosterically activated by GTP. Inhibited by UTP. Its function is as follows. Catalyzes the reversible phosphorylation of UMP to UDP. The sequence is that of Uridylate kinase from Streptococcus pneumoniae (strain ATCC BAA-255 / R6).